The chain runs to 340 residues: Anthranilate phosphoribosyltransferase (340 aa).

5-phospho-alpha-D-ribose 1-diphosphate contacts are provided by residues G79, 82–83, S87, 89–92, 107–115, and S119; these read GD, NIST, and KHGNRSVSS. G79 is a binding site for anthranilate. S91 provides a ligand contact to Mg(2+). An anthranilate-binding site is contributed by N110. R165 contributes to the anthranilate binding site. Mg(2+)-binding residues include D224 and E225.

This sequence belongs to the anthranilate phosphoribosyltransferase family. Homodimer. Mg(2+) serves as cofactor.

The enzyme catalyses N-(5-phospho-beta-D-ribosyl)anthranilate + diphosphate = 5-phospho-alpha-D-ribose 1-diphosphate + anthranilate. It functions in the pathway amino-acid biosynthesis; L-tryptophan biosynthesis; L-tryptophan from chorismate: step 2/5. Its function is as follows. Catalyzes the transfer of the phosphoribosyl group of 5-phosphorylribose-1-pyrophosphate (PRPP) to anthranilate to yield N-(5'-phosphoribosyl)-anthranilate (PRA). In Oceanobacillus iheyensis (strain DSM 14371 / CIP 107618 / JCM 11309 / KCTC 3954 / HTE831), this protein is Anthranilate phosphoribosyltransferase.